The following is a 122-amino-acid chain: Large ribosomal subunit protein uL14 (122 aa).

It belongs to the universal ribosomal protein uL14 family. As to quaternary structure, part of the 50S ribosomal subunit. Forms a cluster with proteins L3 and L19. In the 70S ribosome, L14 and L19 interact and together make contacts with the 16S rRNA in bridges B5 and B8.

Functionally, binds to 23S rRNA. Forms part of two intersubunit bridges in the 70S ribosome. This Campylobacter hominis (strain ATCC BAA-381 / DSM 21671 / CCUG 45161 / LMG 19568 / NCTC 13146 / CH001A) protein is Large ribosomal subunit protein uL14.